The following is a 485-amino-acid chain: Probable high-affinity nitrate transporter 2.4 (485 aa).

Transmembrane regions (helical) follow at residues 56-76 (WMSL…LPAM), 80-100 (LVLA…ATLV), 119-139 (GVAS…ASSP), 147-167 (FVAG…SRIF), 177-197 (AVAA…MPVA), 215-235 (VTYL…LAFP), 270-290 (AWLL…MENV), 305-327 (AAGA…GGVA), 341-361 (LWAL…VGRM), 377-397 (VACA…VPFV), 405-425 (VSGM…RLFF), and 435-455 (AISC…LIHF).

This sequence belongs to the major facilitator superfamily. Nitrate/nitrite porter (TC 2.A.1.8) family. Expressed in the base of the lateral root primordia, root-shoot junction zone, leaves, ends of the husk and vascular tissue of the anthers.

Its subcellular location is the cell membrane. Involved in nitrate transport. This chain is Probable high-affinity nitrate transporter 2.4 (NRT2.4), found in Oryza sativa subsp. japonica (Rice).